Here is a 926-residue protein sequence, read N- to C-terminus: Alpha-aminoadipic semialdehyde synthase, mitochondrial (926 aa).

The transit peptide at 1–27 directs the protein to the mitochondrion; it reads MLRAQRLRLARLRACVSRGLHHKPVMA. The interval 28-455 is lysine-ketoglutarate reductase; sequence LRREDVNAWE…DAVITSNGLL (428 aa). N6-acetyllysine is present on residues Lys48, Lys52, and Lys56. Residue Lys93 is modified to N6-acetyllysine; alternate. Lys93 carries the N6-succinyllysine; alternate modification. Lys128 carries the N6-acetyllysine modification. The residue at position 138 (Lys138) is an N6-acetyllysine; alternate. At Lys138 the chain carries N6-succinyllysine; alternate. Lys274 is subject to N6-succinyllysine. Lys286 carries the N6-acetyllysine; alternate modification. Lys286 is subject to N6-succinyllysine; alternate. Position 333 is an N6-succinyllysine (Lys333). The residue at position 458 (Lys458) is an N6-acetyllysine; alternate. Lys458 is modified (N6-succinyllysine; alternate). The segment at 477–926 is saccharopine dehydrogenase; the sequence is MSTKKKVLVL…VFNTQSTIKL (450 aa). 3 residues coordinate NAD(+): Ser488, Asp512, and Gln516. N6-acetyllysine; alternate is present on residues Lys523 and Lys535. Residues Lys523 and Lys535 each carry the N6-succinyllysine; alternate modification. NAD(+)-binding residues include Leu554, Ala576, and Ser577. 577–578 contacts L-saccharopine; it reads SY. An N6-acetyllysine; alternate modification is found at Lys584. Lys584 carries the post-translational modification N6-succinyllysine; alternate. Residues Leu603, Asp604, and Pro605 each contribute to the NAD(+) site. Asp604 contacts L-saccharopine. Residue Arg703 coordinates L-saccharopine. Lys707 bears the N6-acetyllysine mark. 724–726 provides a ligand contact to L-saccharopine; it reads TLR. The residue at position 732 (Lys732) is an N6-succinyllysine. Lys739 is modified (N6-acetyllysine). Lys761 carries the post-translational modification N6-acetyllysine; alternate. At Lys761 the chain carries N6-succinyllysine; alternate. 2 positions are modified to N6-acetyllysine: Lys778 and Lys780.

In the N-terminal section; belongs to the AlaDH/PNT family. It in the C-terminal section; belongs to the saccharopine dehydrogenase family. Homotetramer.

It localises to the mitochondrion. It carries out the reaction L-saccharopine + NADP(+) + H2O = L-lysine + 2-oxoglutarate + NADPH + H(+). It catalyses the reaction L-saccharopine + NAD(+) + H2O = (S)-2-amino-6-oxohexanoate + L-glutamate + NADH + H(+). The protein operates within amino-acid degradation; L-lysine degradation via saccharopine pathway; glutaryl-CoA from L-lysine: step 1/6. It functions in the pathway amino-acid degradation; L-lysine degradation via saccharopine pathway; glutaryl-CoA from L-lysine: step 2/6. Its function is as follows. Bifunctional enzyme that catalyzes the first two steps in lysine degradation. The protein is Alpha-aminoadipic semialdehyde synthase, mitochondrial of Rattus norvegicus (Rat).